Reading from the N-terminus, the 342-residue chain is Guanine nucleotide-binding protein alpha-9 subunit (342 aa).

Residue glycine 2 is the site of N-myristoyl glycine attachment. A lipid anchor (S-palmitoyl cysteine) is attached at cysteine 3. The G-alpha domain occupies 28-342 (REIKLLLLGS…IIQSILKLHY (315 aa)). The G1 motif stretch occupies residues 31-44 (KLLLLGSGDSGKST). GTP is bound by residues 36–43 (GSGDSGKS), 167–173 (LRCRQRT), 192–196 (DVGGQ), 261–264 (NKND), and alanine 316. Mg(2+)-binding residues include serine 43 and threonine 173. Residues 165-173 (DVLRCRQRT) form a G2 motif region. The G3 motif stretch occupies residues 188 to 197 (FRLIDVGGQK). Positions 257 to 264 (VLFLNKND) are G4 motif. The G5 motif stretch occupies residues 314 to 319 (TTATDT).

The protein belongs to the G-alpha family. G proteins are composed of 3 units; alpha, beta and gamma. The alpha chain contains the guanine nucleotide binding site.

Functionally, guanine nucleotide-binding proteins (G proteins) are involved as modulators or transducers in various transmembrane signaling systems. G alpha-9 antagonizes broad chemotactic response. It functions rapidly following receptor stimulation to negatively regulate PI3K/PTEN, adenylyl cyclase, and guanylyl cyclase pathways. This Dictyostelium discoideum (Social amoeba) protein is Guanine nucleotide-binding protein alpha-9 subunit (gpaI).